Here is a 386-residue protein sequence, read N- to C-terminus: Short integuments 2, mitochondrial (386 aa).

Residues 37–207 (TRAIRNRLKL…VLDSPGVLVP (171 aa)) form the CP-type G domain. Residues 55–59 (DARIP) carry the DARXP motif motif. Residues 81–84 (NKKD) are G4. GTP is bound by residues 81–84 (NKKD), 109–110 (NA), and 146–151 (NVGKSA). The tract at residues 109–111 (NAH) is G5. Residues 143–150 (GVPNVGKS) form a G1 region. The tract at residues 180–184 (GVTQD) is G2. Residues 200 to 203 (DSPG) are G3. G203 provides a ligand contact to GTP.

It belongs to the TRAFAC class YlqF/YawG GTPase family. MTG1 subfamily. In terms of tissue distribution, expressed in seedlings, roots, leaves, stems, inflorescences and siliques.

Its subcellular location is the mitochondrion. In terms of biological role, GTPase that may function in mitochondrial ribosome assembly. Involved in a variety of growth processes during vegetative development and promotes growth and cell division in the developing integuments. The sequence is that of Short integuments 2, mitochondrial from Arabidopsis thaliana (Mouse-ear cress).